The chain runs to 170 residues: Flavodoxin (170 aa).

A Flavodoxin-like domain is found at 4–165; it reads IGLFYGTQTG…RVKTWVSEIK (162 aa).

It belongs to the flavodoxin family. FMN serves as cofactor.

In terms of biological role, low-potential electron donor to a number of redox enzymes. This Synechocystis sp. (strain ATCC 27184 / PCC 6803 / Kazusa) protein is Flavodoxin (isiB).